The following is a 652-amino-acid chain: Serine/threonine-protein kinase ssp1 (652 aa).

Residue Y58 is modified to Phosphotyrosine. At S59 the chain carries Phosphoserine. At Y63 the chain carries Phosphotyrosine. A Protein kinase domain is found at Y135–T409. ATP is bound by residues L141–V149 and K164. The active-site Proton acceptor is the D267. Disordered regions lie at residues D467 to L491 and N506 to K529. Residues S508 to H518 are compositionally biased toward basic and acidic residues.

Belongs to the protein kinase superfamily. Ser/Thr protein kinase family.

It localises to the cytoplasm. The catalysed reaction is L-seryl-[protein] + ATP = O-phospho-L-seryl-[protein] + ADP + H(+). It catalyses the reaction L-threonyl-[protein] + ATP = O-phospho-L-threonyl-[protein] + ADP + H(+). Functionally, involved in actin localization and thus in polarized cell growth. The polypeptide is Serine/threonine-protein kinase ssp1 (ssp1) (Schizosaccharomyces pombe (strain 972 / ATCC 24843) (Fission yeast)).